The sequence spans 331 residues: Ferrochelatase (331 aa).

Positions 187 and 286 each coordinate Fe cation.

Belongs to the ferrochelatase family.

The protein localises to the cytoplasm. The enzyme catalyses heme b + 2 H(+) = protoporphyrin IX + Fe(2+). It participates in porphyrin-containing compound metabolism; protoheme biosynthesis; protoheme from protoporphyrin-IX: step 1/1. Catalyzes the ferrous insertion into protoporphyrin IX. This is Ferrochelatase from Legionella pneumophila subsp. pneumophila (strain Philadelphia 1 / ATCC 33152 / DSM 7513).